The chain runs to 60 residues: UPF0434 protein Rfer_3156 (60 aa).

This sequence belongs to the UPF0434 family.

This chain is UPF0434 protein Rfer_3156, found in Albidiferax ferrireducens (strain ATCC BAA-621 / DSM 15236 / T118) (Rhodoferax ferrireducens).